Here is a 283-residue protein sequence, read N- to C-terminus: MAIGVFDSGVGGLTVHHRLVERFPDADFVYLADQANAPYGGRPGEEIVELTKAGCIRLFEAGCDLVVLACNTAASVALRRLQQTWLPGYRRETGRALNVLGIVVPTIEAATGLPWEHEAERRGEKVEKLDILGVFSTPATARSRVYEIEIDKRRQDVAVFSEPCPELARMIEAGAPREELKAVIEGHVQALRTRIGRAPDRAILGCTHYEIVADLFREALPPGTPLIRQPEATADALARYLDRHPEFDPGRSGLRRFLTTGEPGAQNSLVETFWGGPLSFEPA.

Substrate contacts are provided by residues 7-8 (DS) and 39-40 (YG). The active-site Proton donor/acceptor is the cysteine 70. 71–72 (NT) lines the substrate pocket. The active-site Proton donor/acceptor is the cysteine 206. Position 207–208 (207–208 (TH)) interacts with substrate.

The protein belongs to the aspartate/glutamate racemases family.

It carries out the reaction L-glutamate = D-glutamate. It functions in the pathway cell wall biogenesis; peptidoglycan biosynthesis. In terms of biological role, provides the (R)-glutamate required for cell wall biosynthesis. This Phenylobacterium zucineum (strain HLK1) protein is Glutamate racemase.